Here is a 227-residue protein sequence, read N- to C-terminus: Cytidylate kinase (227 aa).

ATP is bound at residue 12-20; sequence GPSGAGKGT.

The protein belongs to the cytidylate kinase family. Type 1 subfamily.

It localises to the cytoplasm. The enzyme catalyses CMP + ATP = CDP + ADP. It carries out the reaction dCMP + ATP = dCDP + ADP. This is Cytidylate kinase from Marinomonas sp. (strain MWYL1).